The primary structure comprises 721 residues: Homeobox-leucine zipper protein HDG2 (721 aa).

Residues 17–70 form a disordered region; it reads NNHNYNHEDNNNEGFLRDDEFDSPNTKSGSENQEGGSGNDQDPLHPNKKKRYHR. Basic and acidic residues predominate over residues 21–34; it reads YNHEDNNNEGFLRD. A DNA-binding region (homeobox) is located at residues 64–123; that stretch reads KKKRYHRHTQLQIQEMEAFFKECPHPDDKQRKQLSRELNLEPLQVKFWFQNKRTQMKNHH. Residues 120–194 adopt a coiled-coil conformation; it reads KNHHERHENS…DRISAIAAKY (75 aa). The START domain maps to 242 to 468; it reads TESDKPVIID…LDRQCERLAS (227 aa).

It belongs to the HD-ZIP homeobox family. Class IV subfamily. Interacts with AIL7/PLT7, ANT, BBM and AIL1. As to expression, expressed in hairless cell files of the hypocotyl epidermis. Expressed in shoot apical meristem (SAM) with higher levels in L1 cells and the epidermal layer of young leaves. Expressed in primary root tips, in the L1 of apical inflorescence meristems, early flower primordia, carpel epidermis, ovule primordia, nucellus, chalaze and seed coat.

Its subcellular location is the nucleus. Functionally, probable transcription factor. Involved, together with PDF2, in the regulation of flower organs development by promoting the expression of APETALA 3 (AP3) in the epidermis and internal cell layers of developing flowers. This Arabidopsis thaliana (Mouse-ear cress) protein is Homeobox-leucine zipper protein HDG2.